The sequence spans 493 residues: Galactose-1-phosphate uridylyltransferase (493 aa).

This sequence belongs to the galactose-1-phosphate uridylyltransferase type 2 family.

It localises to the cytoplasm. The catalysed reaction is alpha-D-galactose 1-phosphate + UDP-alpha-D-glucose = alpha-D-glucose 1-phosphate + UDP-alpha-D-galactose. It participates in carbohydrate metabolism; galactose metabolism. The sequence is that of Galactose-1-phosphate uridylyltransferase (galT) from Streptococcus thermophilus.